We begin with the raw amino-acid sequence, 610 residues long: MTIKFLSESTINRIAAGEVIERPASVVKELVENAVDASSTKIDIVLERAGKNLIIISDDGIGMTDKELEIAVERHTTSKFDESDFLNINTFGFRGEALPSIAAISKMLITSKKRDADKAFQIKLIGGNEKQVTISVHNEGTKIEIRDLFFATPARLKFLRADKTELAATVDVVKKIALAHPKISFSLTHDGKNLLKLKGQNKDAETNLKQRIIDVIGDDFIKNAAYIDFKTPDFSICGYTSSPTYNRASSEDQFLFINNRSVKDKLLQVALRVAYQDYLARDRYPICAIFLQIDPQLVDVNVHPAKAEVRFHDPNYVRNLLIEAIKNALTNKSHVTSTTIASDALELFKNPLVNKQSPVSKVINVNSKSADYRPTTHSTLNTVPQNHVCQKLIDTLSHAKIEQEVENRIEHEQQTRKQYKLGAAKAQLHTTYIISQTEDSIVITDQHAAHERLGYEKIKDYLKTEELIKQRLLIPEIVELLNEKKADCLYDHREKLYKLGLTLEKFGEKSIIVTEIPNILGDVNVQKLIQDLADHLSDFGKNIALTELIEHVTETYACHYSIRAGRKLSADEMNALLRQMENTPLSGQCNHGRPTYIELKLKDIERLFGR.

The protein belongs to the DNA mismatch repair MutL/HexB family.

In terms of biological role, this protein is involved in the repair of mismatches in DNA. It is required for dam-dependent methyl-directed DNA mismatch repair. May act as a 'molecular matchmaker', a protein that promotes the formation of a stable complex between two or more DNA-binding proteins in an ATP-dependent manner without itself being part of a final effector complex. The sequence is that of DNA mismatch repair protein MutL from Rickettsia africae (strain ESF-5).